Reading from the N-terminus, the 415-residue chain is Glutamyl-tRNA reductase (415 aa).

Substrate-binding positions include 49 to 52, Ser-104, 109 to 111, and Gln-115; these read TCNR and EPQ. The Nucleophile role is filled by Cys-50. NADP(+) is bound at residue 184 to 189; sequence GAGEMI.

It belongs to the glutamyl-tRNA reductase family. In terms of assembly, homodimer.

The enzyme catalyses (S)-4-amino-5-oxopentanoate + tRNA(Glu) + NADP(+) = L-glutamyl-tRNA(Glu) + NADPH + H(+). It participates in porphyrin-containing compound metabolism; protoporphyrin-IX biosynthesis; 5-aminolevulinate from L-glutamyl-tRNA(Glu): step 1/2. In terms of biological role, catalyzes the NADPH-dependent reduction of glutamyl-tRNA(Glu) to glutamate 1-semialdehyde (GSA). This Neisseria meningitidis serogroup C (strain 053442) protein is Glutamyl-tRNA reductase.